Here is a 129-residue protein sequence, read N- to C-terminus: Glycine cleavage system H protein (129 aa).

Residues glutamate 24–lysine 106 enclose the Lipoyl-binding domain. N6-lipoyllysine is present on lysine 65.

It belongs to the GcvH family. The glycine cleavage system is composed of four proteins: P, T, L and H. The cofactor is (R)-lipoate.

The glycine cleavage system catalyzes the degradation of glycine. The H protein shuttles the methylamine group of glycine from the P protein to the T protein. The protein is Glycine cleavage system H protein of Aeromonas salmonicida (strain A449).